We begin with the raw amino-acid sequence, 232 residues long: Aquaporin Z 2 (232 aa).

2 consecutive transmembrane segments (helical) span residues 9-29 (FLGT…ASAF) and 32-52 (VGIG…TMAY). The short motif at 63–65 (NPA) is the NPA 1 element. Helical transmembrane passes span 82-102 (VSYV…LYVI), 129-149 (LTAA…IILG), and 158-178 (GFAP…SIPV). An NPA 2 motif is present at residues 184-186 (NPA). A helical membrane pass occupies residues 200-220 (LSQLWLFWIAPLFGAAIAGIV).

Belongs to the MIP/aquaporin (TC 1.A.8) family. As to quaternary structure, homotetramer.

The protein resides in the cell inner membrane. It carries out the reaction H2O(in) = H2O(out). Functionally, channel that permits osmotically driven movement of water in both directions. It is involved in the osmoregulation and in the maintenance of cell turgor during volume expansion in rapidly growing cells. It mediates rapid entry or exit of water in response to abrupt changes in osmolarity. This Rhizobium meliloti (strain 1021) (Ensifer meliloti) protein is Aquaporin Z 2.